A 43-amino-acid chain; its full sequence is SPbeta prophage-derived uncharacterized protein YopG (43 aa).

The sequence is that of SPbeta prophage-derived uncharacterized protein YopG (yopG) from Bacillus subtilis (strain 168).